The chain runs to 181 residues: Der GTPase-activating protein YihI (181 aa).

Disordered stretches follow at residues 1–75 and 145–181; these read MSRK…KKIP and EPEA…DYKG. Basic residues predominate over residues 32–43; that stretch reads RLRKKDKKRKGL. Residues 146–155 show a composition bias toward acidic residues; the sequence is PEAEEEFEDE. Residues 156-165 show a composition bias toward basic and acidic residues; that stretch reads APVRKSRSDD. Acidic residues predominate over residues 166 to 181; the sequence is DLLADFEDFDMDDYKG.

This sequence belongs to the YihI family. Interacts with Der.

Its function is as follows. A GTPase-activating protein (GAP) that modifies Der/EngA GTPase function. May play a role in ribosome biogenesis. The chain is Der GTPase-activating protein YihI from Vibrio vulnificus (strain YJ016).